Consider the following 450-residue polypeptide: GTPase Der (450 aa).

2 EngA-type G domains span residues 3–170 (PTIA…LATG) and 183–356 (LKIA…AECS). Residues 9–16 (GRPNVGKS), 56–60 (DTGGL), 122–125 (NKVD), 189–196 (GRPNAGKS), 236–240 (DTAGV), and 301–304 (NKID) contribute to the GTP site. A KH-like domain is found at 357 to 441 (LRISTGQLNR…PLNIVFRSTF (85 aa)).

It belongs to the TRAFAC class TrmE-Era-EngA-EngB-Septin-like GTPase superfamily. EngA (Der) GTPase family. Associates with the 50S ribosomal subunit.

GTPase that plays an essential role in the late steps of ribosome biogenesis. The protein is GTPase Der of Maridesulfovibrio salexigens (strain ATCC 14822 / DSM 2638 / NCIMB 8403 / VKM B-1763) (Desulfovibrio salexigens).